A 197-amino-acid polypeptide reads, in one-letter code: Cerebellin-3 (197 aa).

Residues 1-24 (MGTEWHKPKLSLALVLLTLEAGWA) form the signal peptide. The C1q domain occupies 59 to 197 (APPGRVAFAA…SFSGFLIFPL (139 aa)). Residues 64–197 (VAFAAVRSHH…SFSGFLIFPL (134 aa)) form a necessary for interaction with CBLN3, and homotrimerization region. Asn-82 carries N-linked (GlcNAc...) asparagine glycosylation.

Heterohexamer; disulfide-linked heterotrimers. Interacts with CBLN1. May also form oligomers with CBLN2 and CBLN4. As to expression, expressed in brain, restricted to the cerebellar cortex. Within the cerebellum, expressed in granule layers (at protein level). Also detected in postsynaptic Purkinje cell spines (at protein level).

The protein localises to the endoplasmic reticulum. The protein resides in the golgi apparatus. It is found in the cis-Golgi network. It localises to the secreted. Its subcellular location is the synapse. May be involved in synaptic functions in the CNS. The protein is Cerebellin-3 (Cbln3) of Mus musculus (Mouse).